A 456-amino-acid polypeptide reads, in one-letter code: tRNA-2-methylthio-N(6)-dimethylallyladenosine synthase (456 aa).

Positions 6-125 (KRLFIKTYGC…LPELIAQAHR (120 aa)) constitute an MTTase N-terminal domain. 6 residues coordinate [4Fe-4S] cluster: Cys15, Cys51, Cys88, Cys163, Cys167, and Cys170. Residues 149–385 (QVEGYSAFVT…QELLSDQQAA (237 aa)) form the Radical SAM core domain. The TRAM domain occupies 388-450 (ESMIGRTLPV…RNSLSGSLTG (63 aa)).

The protein belongs to the methylthiotransferase family. MiaB subfamily. In terms of assembly, monomer. [4Fe-4S] cluster is required as a cofactor.

It is found in the cytoplasm. It catalyses the reaction N(6)-dimethylallyladenosine(37) in tRNA + (sulfur carrier)-SH + AH2 + 2 S-adenosyl-L-methionine = 2-methylsulfanyl-N(6)-dimethylallyladenosine(37) in tRNA + (sulfur carrier)-H + 5'-deoxyadenosine + L-methionine + A + S-adenosyl-L-homocysteine + 2 H(+). Its function is as follows. Catalyzes the methylthiolation of N6-(dimethylallyl)adenosine (i(6)A), leading to the formation of 2-methylthio-N6-(dimethylallyl)adenosine (ms(2)i(6)A) at position 37 in tRNAs that read codons beginning with uridine. This Maricaulis maris (strain MCS10) (Caulobacter maris) protein is tRNA-2-methylthio-N(6)-dimethylallyladenosine synthase.